The chain runs to 1112 residues: Lysylphosphatidylglycerol biosynthesis bifunctional protein LysX (1112 aa).

Residues 1 to 613 (MTLTSPPRTR…VLHHDGTAPD (613 aa)) are phosphatidylglycerol lysyltransferase. 7 consecutive transmembrane segments (helical) span residues 18 to 38 (VPAAAGWTVGVIATLSLIASV), 60 to 80 (FPDTSFAWAFVLALLAGALAA), 84 to 104 (IAWWILLLYMVAAAGWNVADL), 118 to 138 (VIGLAFHLAAVAFLLLARPLF), 152 to 172 (GVLAAGMAVGVLVGWGLLELF), 209 to 229 (VNALLGLFGALALMAAAIVLF), and 308 to 328 (AWLALCGTYGWAPGVMGASVG). A lysine--tRNA ligase region spans residues 614 to 1112 (MSGLRTDTAD…TLPFPLARPR (499 aa)). Residues 675–748 (VAGRVLRIRD…GTRSLLVRHW (74 aa)) constitute a DNA-binding region (OB). D1024 and E1031 together coordinate Mg(2+).

In the N-terminal section; belongs to the LPG synthetase family. The protein in the C-terminal section; belongs to the class-II aminoacyl-tRNA synthetase family. It depends on Mg(2+) as a cofactor.

It localises to the cell membrane. It carries out the reaction tRNA(Lys) + L-lysine + ATP = L-lysyl-tRNA(Lys) + AMP + diphosphate. It catalyses the reaction L-lysyl-tRNA(Lys) + a 1,2-diacyl-sn-glycero-3-phospho-(1'-sn-glycerol) = a 1,2-diacyl-sn-glycero-3-phospho-1'-(3'-O-L-lysyl)-sn-glycerol + tRNA(Lys). Functionally, catalyzes the production of L-lysyl-tRNA(Lys)transfer and the transfer of a lysyl group from L-lysyl-tRNA(Lys) to membrane-bound phosphatidylglycerol (PG), which produces lysylphosphatidylglycerol (LPG), one of the components of the bacterial membrane with a positive net charge. LPG synthesis contributes to the resistance to cationic antimicrobial peptides (CAMPs) and likely protects M.tuberculosis against the CAMPs produced by competiting microorganisms (bacteriocins). In fact, the modification of anionic phosphatidylglycerol with positively charged L-lysine results in repulsion of the peptides. The polypeptide is Lysylphosphatidylglycerol biosynthesis bifunctional protein LysX (lysX) (Mycobacterium sp. (strain KMS)).